Here is a 1268-residue protein sequence, read N- to C-terminus: ATP-dependent helicase/nuclease subunit A (1268 aa).

The UvrD-like helicase ATP-binding domain maps to 3–476 (TKWTEEQELA…IMLYKNFRSR (474 aa)). ATP is bound at residue 24 to 31 (AAAGSGKT). The region spanning 528–824 (IENLKVAGDI…RIMSIHKSKG (297 aa)) is the UvrD-like helicase C-terminal domain.

This sequence belongs to the helicase family. AddA subfamily. Heterodimer of AddA and AddB/RexB. It depends on Mg(2+) as a cofactor.

The catalysed reaction is Couples ATP hydrolysis with the unwinding of duplex DNA by translocating in the 3'-5' direction.. The enzyme catalyses ATP + H2O = ADP + phosphate + H(+). In terms of biological role, the heterodimer acts as both an ATP-dependent DNA helicase and an ATP-dependent, dual-direction single-stranded exonuclease. Recognizes the chi site generating a DNA molecule suitable for the initiation of homologous recombination. The AddA nuclease domain is required for chi fragment generation; this subunit has the helicase and 3' -&gt; 5' nuclease activities. The sequence is that of ATP-dependent helicase/nuclease subunit A from Clostridium perfringens (strain 13 / Type A).